The chain runs to 30 residues: Cysteine-rich venom protein okinavin (30 aa).

The segment at 1 to 30 (SVDFDSESPRKPXIQNEIVDLHNPLRRXVN) is disordered.

It belongs to the CRISP family. In terms of processing, contains 8 disulfide bonds. As to expression, expressed by the venom gland.

Its subcellular location is the secreted. Inhibits calcium-activated potassium channels (KCa), voltage-gated potassium channel (Kv), and the calcium release channel/ryanodine receptor (RyR). In Ovophis okinavensis (Ryukyu Island pit viper), this protein is Cysteine-rich venom protein okinavin.